The chain runs to 102 residues: Small ribosomal subunit protein uS10 (102 aa).

Belongs to the universal ribosomal protein uS10 family. In terms of assembly, part of the 30S ribosomal subunit.

Involved in the binding of tRNA to the ribosomes. This is Small ribosomal subunit protein uS10 from Clostridium novyi (strain NT).